The primary structure comprises 200 residues: dTTP/UTP pyrophosphatase (200 aa).

Asp81 (proton acceptor) is an active-site residue.

It belongs to the Maf family. YhdE subfamily. The cofactor is a divalent metal cation.

Its subcellular location is the cytoplasm. The enzyme catalyses dTTP + H2O = dTMP + diphosphate + H(+). It carries out the reaction UTP + H2O = UMP + diphosphate + H(+). Nucleoside triphosphate pyrophosphatase that hydrolyzes dTTP and UTP. May have a dual role in cell division arrest and in preventing the incorporation of modified nucleotides into cellular nucleic acids. This is dTTP/UTP pyrophosphatase from Cupriavidus pinatubonensis (strain JMP 134 / LMG 1197) (Cupriavidus necator (strain JMP 134)).